The primary structure comprises 239 residues: Flagellar L-ring protein (239 aa).

Residues 1–16 (MKPVILATASALLLAA) form the signal peptide. Cys-17 carries N-palmitoyl cysteine lipidation. Residue Cys-17 is the site of S-diacylglycerol cysteine attachment. Polar residues predominate over residues 120 to 138 (SGSTSGSASGNLGLTGDTS). The segment at 120-145 (SGSTSGSASGNLGLTGDTSTDGKGKI) is disordered.

Belongs to the FlgH family. The basal body constitutes a major portion of the flagellar organelle and consists of four rings (L,P,S, and M) mounted on a central rod.

It localises to the cell outer membrane. Its subcellular location is the bacterial flagellum basal body. Functionally, assembles around the rod to form the L-ring and probably protects the motor/basal body from shearing forces during rotation. The polypeptide is Flagellar L-ring protein (Azorhizobium caulinodans (strain ATCC 43989 / DSM 5975 / JCM 20966 / LMG 6465 / NBRC 14845 / NCIMB 13405 / ORS 571)).